We begin with the raw amino-acid sequence, 331 residues long: Ribose-phosphate pyrophosphokinase (331 aa).

55 to 57 contacts ATP; sequence DGE. His-148 and Asp-187 together coordinate Mg(2+). Lys-211 is a catalytic residue. Residues Arg-213, Asp-237, and 241–245 contribute to the D-ribose 5-phosphate site; that span reads DTGGT.

The protein belongs to the ribose-phosphate pyrophosphokinase family. Class I subfamily. In terms of assembly, homohexamer. Mg(2+) serves as cofactor.

Its subcellular location is the cytoplasm. The enzyme catalyses D-ribose 5-phosphate + ATP = 5-phospho-alpha-D-ribose 1-diphosphate + AMP + H(+). It functions in the pathway metabolic intermediate biosynthesis; 5-phospho-alpha-D-ribose 1-diphosphate biosynthesis; 5-phospho-alpha-D-ribose 1-diphosphate from D-ribose 5-phosphate (route I): step 1/1. Its function is as follows. Involved in the biosynthesis of the central metabolite phospho-alpha-D-ribosyl-1-pyrophosphate (PRPP) via the transfer of pyrophosphoryl group from ATP to 1-hydroxyl of ribose-5-phosphate (Rib-5-P). In Prochlorococcus marinus subsp. pastoris (strain CCMP1986 / NIES-2087 / MED4), this protein is Ribose-phosphate pyrophosphokinase.